A 791-amino-acid chain; its full sequence is Metabotropic glutamate receptor-like protein D (791 aa).

Residues 1-22 (MKINSFLIILILLFISIKNSNG) form the signal peptide. Over 23–390 (EPEKKFKLIT…TEVYQSRPIQ (368 aa)) the chain is Extracellular. N-linked (GlcNAc...) asparagine glycans are attached at residues N72, N168, N279, N290, N306, and N349. Residues 391-411 (IAISSISSFFIVTVLVMMGLV) traverse the membrane as a helical segment. Residues 412 to 424 (VRFRKNPSIRSAS) are Cytoplasmic-facing. A helical membrane pass occupies residues 425–445 (PIFLNFILFGALIIYVGIIIW). Over 446 to 453 (SSSINSAS) the chain is Extracellular. Residues 454 to 474 (CNAQFWLVTLGFTTLIGSLVV) traverse the membrane as a helical segment. At 475-495 (KNVRIWLIFDNPELKLVKITN) the chain is on the cytoplasmic side. Residues 496 to 516 (LQLVPWVGVCLVINIILMSIL) traverse the membrane as a helical segment. At 517-550 (TSVGDLREVNAQGIDSLGKYEFMRICKMNSSGAS) the chain is on the extracellular side. N-linked (GlcNAc...) asparagine glycosylation occurs at N545. The helical transmembrane segment at 551-571 (TLYTILAYFAALLLIGVFVSW) threads the bilayer. Over 572–585 (KIRIVDILEFNESK) the chain is Cytoplasmic. The chain crosses the membrane as a helical span at residues 586–606 (AIANTLYAISFCLFVIVPLMI). Over 607 to 615 (SPQDKQSEK) the chain is Extracellular. Residues 616-636 (IILCIAGLFIVTAAVLIIFVP) traverse the membrane as a helical segment. Residues 637–791 (KFYRVYIFGS…KNEENNDGDN (155 aa)) lie on the Cytoplasmic side of the membrane. Disordered regions lie at residues 664 to 715 (TARA…SEPN) and 746 to 791 (IITE…DGDN). A compositionally biased stretch (gly residues) spans 674–689 (SSGGGAGSGGATGGSG). Over residues 749–760 (ENGQDSNNNNNN) the composition is skewed to low complexity. The stretch at 752–781 (QDSNNNNNNEENKDNNIENNKISEEIKENL) forms a coiled coil. The segment covering 761–785 (EENKDNNIENNKISEEIKENLKNEE) has biased composition (basic and acidic residues).

It in the N-terminal section; belongs to the BMP lipoprotein family. The protein in the C-terminal section; belongs to the G-protein coupled receptor 3 family. GABA-B receptor subfamily.

The protein resides in the membrane. In Dictyostelium discoideum (Social amoeba), this protein is Metabotropic glutamate receptor-like protein D (grlD).